Reading from the N-terminus, the 169-residue chain is Shikimate kinase (169 aa).

Position 12–17 (glycine 12–threonine 17) interacts with ATP. Serine 16 serves as a coordination point for Mg(2+). Residues aspartate 34, arginine 57, and glycine 79 each coordinate substrate. Arginine 116 contributes to the ATP binding site. Arginine 133 provides a ligand contact to substrate.

The protein belongs to the shikimate kinase family. As to quaternary structure, monomer. Mg(2+) serves as cofactor.

It localises to the cytoplasm. The enzyme catalyses shikimate + ATP = 3-phosphoshikimate + ADP + H(+). It participates in metabolic intermediate biosynthesis; chorismate biosynthesis; chorismate from D-erythrose 4-phosphate and phosphoenolpyruvate: step 5/7. Its function is as follows. Catalyzes the specific phosphorylation of the 3-hydroxyl group of shikimic acid using ATP as a cosubstrate. The polypeptide is Shikimate kinase (Clostridium beijerinckii (strain ATCC 51743 / NCIMB 8052) (Clostridium acetobutylicum)).